The sequence spans 64 residues: Mitotic-spindle organizing protein 1 (64 aa).

It belongs to the MOZART1 family. Part of the gamma-tubulin complex. Interacts directly with alp6/GPC3.

It is found in the cytoplasm. Its subcellular location is the cytoskeleton. The protein resides in the microtubule organizing center. It localises to the spindle pole body. Functionally, required for gamma-tubulin complex recruitment to the microtubule organizing center (MTOC). This chain is Mitotic-spindle organizing protein 1 (mzt1), found in Schizosaccharomyces pombe (strain 972 / ATCC 24843) (Fission yeast).